The primary structure comprises 710 residues: Lactotransferrin (710 aa).

The signal sequence occupies residues Met1–Ala19. Phe10 carries the post-translational modification Phosphoserine; alternate. An O-linked (GlcNAc) serine; alternate glycan is attached at Phe10. The tract at residues Gly20 to Ser24 is critical for glycosaminoglycan, lipid A, lysozyme and DNA binding. Bactericidal and antifungal activity regions lie at residues Gly20–Ala29 and Phe39–Arg49. The interval Arg21–Arg22 is important for full bactericidal and antifungal activities. Transferrin-like domains are found at residues Val25–Lys352 and Val364–Lys695. 2 disulfide bridges follow: Cys28–Cys64 and Cys38–Cys55. Interaction with PspA regions lie at residues Phe39–Arg46 and Lys57–Arg58. The segment at Phe39–Arg49 is interaction with lipopolysaccharide. The involved in glycosaminoglycan binding stretch occupies residues Arg46 to Pro51. Residue Asp79 coordinates Fe(3+). Residue Lys92 is part of the active site. Fe(3+) is bound at residue Tyr111. Cystine bridges form between Cys134/Cys217, Cys176/Cys192, Cys189/Cys200, and Cys250/Cys264. The hydrogencarbonate site is built by Thr136, Arg140, Ala142, and Gly143. A glycan (N-linked (GlcNAc...) asparagine) is linked at Asn156. Tyr211 serves as a coordination point for Fe(3+). His272 provides a ligand contact to Fe(3+). Ser278 functions as the Nucleophile in the catalytic mechanism. 2 cysteine pairs are disulfide-bonded: Cys367/Cys399 and Cys377/Cys390. Residues Gln379 and Ser391 each participate in a glycyl lysine isopeptide (Lys-Gly) (interchain with G-Cter in ubiquitin) cross-link. Fe(3+) is bound by residues Asp414 and Tyr454. Intrachain disulfides connect Cys424–Cys705, Cys446–Cys668, Cys478–Cys553, Cys502–Cys696, Cys512–Cys526, Cys523–Cys536, Cys594–Cys608, and Cys646–Cys651. Hydrogencarbonate contacts are provided by Thr480, Arg484, Ala486, and Gly487. Residue Asn497 is glycosylated (N-linked (GlcNAc...) asparagine). Residue Tyr547 coordinates Fe(3+). Fe(3+) is bound at residue His616. The N-linked (GlcNAc...) asparagine glycan is linked to Asn642.

This sequence belongs to the transferrin family. As to quaternary structure, monomer. Found in a complex with LTF, CLU, EPPIN and SEMG1. Found in a complex with MPO and LTF; interacts directly with CP, allows Fe(3+) incorporation into LTF and activation of CP ferroxidase activity. In terms of processing, phosphorylation at Ser-10 activates the transcriptional activity. Phosphorylation at Ser-10 also promotes proteasomal degradation. Alternatively can undergo O-GlcNAcylation at Ser-10. Post-translationally, O-GlcNAcylation at Ser-10 inhibits DNA binding and negatively regulates the transcriptional activity. Alternatively can undergo phosphorylation at Ser-10. Poly-N-acetyllactosaminic carbohydrate moiety seems to be needed for TLR4 activation. In terms of tissue distribution, high levels are found in saliva and tears, intermediate levels in serum and plasma, and low levels in urine. In kidney, detected in the distal collecting tubules in the medulla but not in the cortical region or in blood vessels. Detected in peripheral blood neutrophils (at protein level). Isoform 1 and isoform DeltaLf are expressed in breast, prostate, spleen, pancreas, kidney, small intestine, lung, skeletal muscle, uterus, thymus and fetal liver. Isoform 1 is expressed in brain, testis and peripheral blood leukocytes; isoform DeltaLf is barely detectable in these tissues. Isoform DeltaLf is expressed in placenta, liver and ovary; isoform 1 is barely detectable in these tissues. In kidney, isoform 1 is expressed at high levels in the collecting tubules of the medulla but at very low levels in the cortex.

The protein localises to the secreted. Its subcellular location is the cytoplasmic granule. It is found in the cytoplasm. The protein resides in the nucleus. Functionally, transferrins are iron binding transport proteins which can bind two Fe(3+) ions in association with the binding of an anion, usually bicarbonate. Its function is as follows. Major iron-binding and multifunctional protein found in exocrine fluids such as breast milk and mucosal secretions. Has antimicrobial activity, which depends on the extracellular cation concentration. Antimicrobial properties include bacteriostasis, which is related to its ability to sequester free iron and thus inhibit microbial growth, as well as direct bactericidal properties leading to the release of lipopolysaccharides from the bacterial outer membrane. Can also prevent bacterial biofilm development in P.aeruginosa infection. Has weak antifungal activity against C.albicans. Has anabolic, differentiating and anti-apoptotic effects on osteoblasts and can also inhibit osteoclastogenesis, possibly playing a role in the regulation of bone growth. Promotes binding of species C adenoviruses to epithelial cells, promoting adenovirus infection. Can inhibit papillomavirus infections. Stimulates the TLR4 signaling pathway leading to NF-kappa-B activation and subsequent pro-inflammatory cytokine production while also interfering with the lipopolysaccharide (LPS)-stimulated TLR4 signaling. Inhibits neutrophil granulocyte migration to sites of apoptosis, when secreted by apoptotic cells. Stimulates VEGFA-mediated endothelial cell migration and proliferation. Binds heparin, chondroitin sulfate and possibly other glycosaminoglycans (GAGs). Also binds specifically to pneumococcal surface protein A (PspA), the lipid A portion of bacterial lipopolysaccharide (LPS), lysozyme and DNA. In terms of biological role, lactoferricin binds to the bacterial surface and is crucial for the bactericidal functions. Has some antiviral activity against papillomavirus infection. N-terminal region shows strong antifungal activity against C.albicans. Contains two BBXB heparin-binding consensus sequences that appear to form the predominate functional GAG-binding site. Has antimicrobial activity and is able to permeabilize different ions through liposomal membranes. Functionally, has opioid antagonist activity. Shows preference for mu-receptor. Its function is as follows. Has opioid antagonist activity. Shows higher degrees of preference for kappa-receptors than for mu-receptors. In terms of biological role, the lactotransferrin transferrin-like domain 1 functions as a serine protease of the peptidase S60 family that cuts arginine rich regions. This function contributes to the antimicrobial activity. Shows a preferential cleavage at -Arg-Ser-Arg-Arg-|- and -Arg-Arg-Ser-Arg-|-, and of Z-Phe-Arg-|-aminomethylcoumarin sites. Transcription factor with antiproliferative properties and ability to induce cell cycle arrest. Binds to the DeltaLf response element found in the SKP1, BAX, DCPS, and SELENOH promoters. The sequence is that of Lactotransferrin from Homo sapiens (Human).